The primary structure comprises 542 residues: CTP synthase (542 aa).

The segment at 1-265 (MTRYVFITGG…DREILAHFQM (265 aa)) is amidoligase domain. A CTP-binding site is contributed by Ser-13. Residue Ser-13 participates in UTP binding. Residues 14-19 (SLGKGL) and Asp-71 each bind ATP. Mg(2+) contacts are provided by Asp-71 and Glu-139. Residues 146-148 (DIE), 186-191 (KTKPTQ), and Lys-222 contribute to the CTP site. Residues 186-191 (KTKPTQ) and Lys-222 each bind UTP. 238–240 (RDV) lines the ATP pocket. The Glutamine amidotransferase type-1 domain occupies 291–541 (TIAIVGKYTG…IAAAIDQSRL (251 aa)). Gly-353 lines the L-glutamine pocket. The active-site Nucleophile; for glutamine hydrolysis is the Cys-380. L-glutamine contacts are provided by residues 381 to 384 (FGMQ), Glu-404, and Arg-469. Residues His-514 and Glu-516 contribute to the active site.

The protein belongs to the CTP synthase family. Homotetramer.

It carries out the reaction UTP + L-glutamine + ATP + H2O = CTP + L-glutamate + ADP + phosphate + 2 H(+). The enzyme catalyses L-glutamine + H2O = L-glutamate + NH4(+). The catalysed reaction is UTP + NH4(+) + ATP = CTP + ADP + phosphate + 2 H(+). It participates in pyrimidine metabolism; CTP biosynthesis via de novo pathway; CTP from UDP: step 2/2. Allosterically activated by GTP, when glutamine is the substrate; GTP has no effect on the reaction when ammonia is the substrate. The allosteric effector GTP functions by stabilizing the protein conformation that binds the tetrahedral intermediate(s) formed during glutamine hydrolysis. Inhibited by the product CTP, via allosteric rather than competitive inhibition. Its function is as follows. Catalyzes the ATP-dependent amination of UTP to CTP with either L-glutamine or ammonia as the source of nitrogen. Regulates intracellular CTP levels through interactions with the four ribonucleotide triphosphates. This Methylorubrum extorquens (strain CM4 / NCIMB 13688) (Methylobacterium extorquens) protein is CTP synthase.